The following is a 340-amino-acid chain: Cobalt-precorrin-5B C(1)-methyltransferase (340 aa).

This sequence belongs to the CbiD family.

The catalysed reaction is Co-precorrin-5B + S-adenosyl-L-methionine = Co-precorrin-6A + S-adenosyl-L-homocysteine. It functions in the pathway cofactor biosynthesis; adenosylcobalamin biosynthesis; cob(II)yrinate a,c-diamide from sirohydrochlorin (anaerobic route): step 6/10. Functionally, catalyzes the methylation of C-1 in cobalt-precorrin-5B to form cobalt-precorrin-6A. This Methanococcoides burtonii (strain DSM 6242 / NBRC 107633 / OCM 468 / ACE-M) protein is Cobalt-precorrin-5B C(1)-methyltransferase.